A 164-amino-acid chain; its full sequence is NADH-quinone oxidoreductase subunit I (164 aa).

4Fe-4S ferredoxin-type domains lie at 56 to 85 (RRYE…IEAE) and 95 to 124 (TRYD…EGPN). [4Fe-4S] cluster is bound by residues Cys65, Cys68, Cys71, Cys75, Cys104, Cys107, Cys110, and Cys114.

It belongs to the complex I 23 kDa subunit family. NDH-1 is composed of 14 different subunits. Subunits NuoA, H, J, K, L, M, N constitute the membrane sector of the complex. The cofactor is [4Fe-4S] cluster.

Its subcellular location is the cell inner membrane. It carries out the reaction a quinone + NADH + 5 H(+)(in) = a quinol + NAD(+) + 4 H(+)(out). NDH-1 shuttles electrons from NADH, via FMN and iron-sulfur (Fe-S) centers, to quinones in the respiratory chain. The immediate electron acceptor for the enzyme in this species is believed to be ubiquinone. Couples the redox reaction to proton translocation (for every two electrons transferred, four hydrogen ions are translocated across the cytoplasmic membrane), and thus conserves the redox energy in a proton gradient. This chain is NADH-quinone oxidoreductase subunit I, found in Anaplasma phagocytophilum (strain HZ).